Consider the following 354-residue polypeptide: Homer protein homolog 1 (354 aa).

A WH1 domain is found at 1-110; sequence MGEQPIFSTR…EKFQEFKEAA (110 aa). At G2 the chain carries N-acetylglycine. The interval 114-173 is disordered; that stretch reads KEKSQEKMELTSTPSQESAGGDLQSPLTPESINGTDDERTPDVTQNSEPRAEPTQNALPF. 2 stretches are compositionally biased toward polar residues: residues 138–147 and 155–173; these read SPLTPESING and DVTQ…ALPF. Positions 181-352 form a coiled coil; that stretch reads KHWEAELATL…LRDNLAKLLE (172 aa). Residues 290-354 form a required for tetramerization region; that stretch reads KLQEVEIRNK…DNLAKLLECS (65 aa). Phosphoserine is present on S306.

It belongs to the Homer family. Tetramer; this tetrameric structure is critical for forming the high-order complex with SHANK1, which in turn is necessary for the structural and functional integrity of dendritic spines. Interacts with GRM1, GRM5, ITPR1, DNM3, RYR1, RYR2 and SHANK3. Interacts with IFT57 and OPHN1. Isoform 1 encodes a coiled-coil structure that mediates homo- and heteromultimerization. Interacts with SHANK1; forms high-order polymerized complex with a mesh-like network structure, at least composed of SHANK1, HOMER1 and DLGAP1; the complex formation is SHANK1 multimerization dependent. Interacts with NFATC4. Interacts with DAGLA (via PPXXF motif); this interaction is required for the cell membrane localization of DAGLA. Interacts with SRGAP2.

It is found in the cytoplasm. The protein resides in the postsynaptic density. The protein localises to the synapse. It localises to the cell projection. Its subcellular location is the dendritic spine. In terms of biological role, postsynaptic density scaffolding protein. Binds and cross-links cytoplasmic regions of GRM1, GRM5, ITPR1, DNM3, RYR1, RYR2, SHANK1 and SHANK3. By physically linking GRM1 and GRM5 with ER-associated ITPR1 receptors, it aids the coupling of surface receptors to intracellular calcium release. May also couple GRM1 to PI3 kinase through its interaction with AGAP2. Isoform 1 regulates the trafficking and surface expression of GRM5. Isoform 3 acts as a natural dominant negative, in dynamic competition with constitutively expressed isoform 1 to regulate synaptic metabotropic glutamate function. Isoform 3, may be involved in the structural changes that occur at synapses during long-lasting neuronal plasticity and development. Forms a high-order complex with SHANK1, which in turn is necessary for the structural and functional integrity of dendritic spines. Negatively regulates T cell activation by inhibiting the calcineurin-NFAT pathway. Acts by competing with calcineurin/PPP3CA for NFAT protein binding, hence preventing NFAT activation by PPP3CA. The polypeptide is Homer protein homolog 1 (Homo sapiens (Human)).